A 620-amino-acid chain; its full sequence is Rhamnogalacturonan endolyase YesW (620 aa).

An N-terminal signal peptide occupies residues 1 to 37 (MRRSCLMIRRRKRMFTAVTLLVLLVMGTSVCPVKAEG). Positions 133-152 (LDKPAGGTTPKGESYTYSAN) are disordered. Position 152 (Asn152) interacts with substrate. Residues Asp153, Asp158, Asp160, Asp162, Gln164, and Glu166 each contribute to the Ca(2+) site. Substrate is bound at residue Asp172. Residues Asp187 and Lys207 each coordinate a carbohydrate. Residues Asp222, Asp224, Asp226, Lys228, and Glu230 each coordinate Ca(2+). Residues Gly238 and Arg255 each coordinate a carbohydrate. Ca(2+) is bound by residues His363, Asp369, Asp371, Asp373, Lys375, Glu377, Asp386, His387, His399, Asp401, Asp407, Asp409, Arg412, Gly414, Glu416, and Glu422. Arg452 is a binding site for substrate. 9 residues coordinate Ca(2+): Asp457, Asp459, Tyr462, Gly464, Glu466, Asp496, Asp498, Leu500, and Glu502. 532-534 (NGT) contacts substrate. The Ca(2+) site is built by Asp543, Leu545, Asp547, Arg549, Glu551, Asn592, and Ala594. A substrate-binding site is contributed by Tyr595. Position 596 (Asn596) interacts with Ca(2+).

This sequence belongs to the polysaccharide lyase 11 family. In terms of assembly, monomer. Ca(2+) serves as cofactor. The cofactor is Mn(2+).

The protein resides in the secreted. The catalysed reaction is Endotype eliminative cleavage of L-alpha-rhamnopyranosyl-(1-&gt;4)-alpha-D-galactopyranosyluronic acid bonds of rhamnogalacturonan I domains in ramified hairy regions of pectin leaving L-rhamnopyranose at the reducing end and 4-deoxy-4,5-unsaturated D-galactopyranosyluronic acid at the non-reducing end.. Pectinolytic enzyme that degrades type I rhamnogalacturonan from plant cell walls and releases oligosaccharide products. Degrades rhamnogalacturonan, polygalacturonic acid, pectic acid and pectin. This Bacillus subtilis (strain 168) protein is Rhamnogalacturonan endolyase YesW (yesW).